Here is a 442-residue protein sequence, read N- to C-terminus: tRNA-2-methylthio-N(6)-dimethylallyladenosine synthase (442 aa).

An MTTase N-terminal domain is found at glutamine 2–arginine 117. 6 residues coordinate [4Fe-4S] cluster: cysteine 11, cysteine 47, cysteine 80, cysteine 157, cysteine 161, and cysteine 164. Positions lysine 143–alanine 374 constitute a Radical SAM core domain. The TRAM domain maps to arginine 377–asparagine 442.

It belongs to the methylthiotransferase family. MiaB subfamily. As to quaternary structure, monomer. It depends on [4Fe-4S] cluster as a cofactor.

The protein localises to the cytoplasm. The enzyme catalyses N(6)-dimethylallyladenosine(37) in tRNA + (sulfur carrier)-SH + AH2 + 2 S-adenosyl-L-methionine = 2-methylsulfanyl-N(6)-dimethylallyladenosine(37) in tRNA + (sulfur carrier)-H + 5'-deoxyadenosine + L-methionine + A + S-adenosyl-L-homocysteine + 2 H(+). Catalyzes the methylthiolation of N6-(dimethylallyl)adenosine (i(6)A), leading to the formation of 2-methylthio-N6-(dimethylallyl)adenosine (ms(2)i(6)A) at position 37 in tRNAs that read codons beginning with uridine. This chain is tRNA-2-methylthio-N(6)-dimethylallyladenosine synthase, found in Ehrlichia chaffeensis (strain ATCC CRL-10679 / Arkansas).